The following is a 477-amino-acid chain: E3 ubiquitin-protein ligase TRIM17 (477 aa).

An RING-type zinc finger spans residues 16–66; the sequence is CSICLDYFTDPVMTTCGHNFCRACIQLSWEKARGKKGRRKRKGSFPCPECR. The segment at 94–135 adopts a B box-type zinc-finger fold; that stretch reads QKQDLCQEHHEPLKLFCQKDQSPICVVCRESREHRLHRVLPA. Residues Cys-99, His-102, Cys-121, and His-127 each contribute to the Zn(2+) site. The stretch at 135–223 forms a coiled coil; the sequence is AEEAVQGYKL…TASRLRESVA (89 aa). Residues 277–475 enclose the B30.2/SPRY domain; sequence PRTVCRVPGQ…MVISTVTMWV (199 aa).

It belongs to the TRIM/RBCC family. Interacts (via coiled coil) with TRIM44 (via coiled coil). Interacts with TRIM28; this interaction prevents TRIM28 activity on BCL2A1. Interacts with TRIM41; this interaction prevents TRIM41 activity on ZSCAN2. Interacts with BECN1. Interacts with NFATC3 and NFATC4; these interactions prevent NFATC3 and NFATC4 nuclear localization. Auto-ubiquitinated. As to expression, almost exclusively in the testis.

The protein localises to the cytoplasm. Its subcellular location is the lysosome. The enzyme catalyses S-ubiquitinyl-[E2 ubiquitin-conjugating enzyme]-L-cysteine + [acceptor protein]-L-lysine = [E2 ubiquitin-conjugating enzyme]-L-cysteine + N(6)-ubiquitinyl-[acceptor protein]-L-lysine.. The protein operates within protein modification; protein ubiquitination. Its function is as follows. E3 ubiquitin ligase that plays important roles in the regulation of neuronal apoptosis, selective autophagy or cell proliferation. Stimulates the degradation of kinetochore ZW10 interacting protein ZWINT in a proteasome-dependent manner, leading to negative regulation of cell proliferation. Inhibits autophagic degradation of diverse known targets while contributing to autophagy of midbodies. Autophagy-inhibitory activity involves MCL1, which TRIM17 assembles into complexes with the key autophagy regulator BECN1. Controls neuronal apoptosis by mediating ubiquitination and degradation of MCL1 to initiate neuronal death. In addition, regulates NFAT transcription factors NFATC3 and NFATC4 activities by preventing their nuclear localization, thus inhibiting their transcriptional activities. Decreases TRIM41-mediated degradation of ZSCAN2 thereby stimulating alpha-synuclein/SNCA transcription in neuronal cells. Prevents the E3 ubiquitin-ligase activity of TRIM28 and its interaction with anti-apoptotic BCL2A1, blocking TRIM28 from ubiquitinating BCL2A1. The chain is E3 ubiquitin-protein ligase TRIM17 (TRIM17) from Homo sapiens (Human).